Here is a 252-residue protein sequence, read N- to C-terminus: Type III pantothenate kinase (252 aa).

6-13 (DIGNTSTA) provides a ligand contact to ATP. Residue 104–107 (GADR) coordinates substrate. The active-site Proton acceptor is the Asp-106. Asp-128 is a K(+) binding site. Thr-131 contributes to the ATP binding site. Thr-183 contributes to the substrate binding site.

It belongs to the type III pantothenate kinase family. As to quaternary structure, homodimer. The cofactor is NH4(+). It depends on K(+) as a cofactor.

Its subcellular location is the cytoplasm. It catalyses the reaction (R)-pantothenate + ATP = (R)-4'-phosphopantothenate + ADP + H(+). It functions in the pathway cofactor biosynthesis; coenzyme A biosynthesis; CoA from (R)-pantothenate: step 1/5. Its function is as follows. Catalyzes the phosphorylation of pantothenate (Pan), the first step in CoA biosynthesis. This is Type III pantothenate kinase from Thermus thermophilus (strain ATCC 27634 / DSM 579 / HB8).